Here is a 194-residue protein sequence, read N- to C-terminus: ATP-dependent Clp protease proteolytic subunit (194 aa).

The Nucleophile role is filled by serine 98. Residue histidine 123 is part of the active site.

It belongs to the peptidase S14 family. As to quaternary structure, fourteen ClpP subunits assemble into 2 heptameric rings which stack back to back to give a disk-like structure with a central cavity, resembling the structure of eukaryotic proteasomes.

The protein localises to the cytoplasm. It carries out the reaction Hydrolysis of proteins to small peptides in the presence of ATP and magnesium. alpha-casein is the usual test substrate. In the absence of ATP, only oligopeptides shorter than five residues are hydrolyzed (such as succinyl-Leu-Tyr-|-NHMec, and Leu-Tyr-Leu-|-Tyr-Trp, in which cleavage of the -Tyr-|-Leu- and -Tyr-|-Trp bonds also occurs).. Functionally, cleaves peptides in various proteins in a process that requires ATP hydrolysis. Has a chymotrypsin-like activity. Plays a major role in the degradation of misfolded proteins. The polypeptide is ATP-dependent Clp protease proteolytic subunit (Aliarcobacter butzleri (strain RM4018) (Arcobacter butzleri)).